Consider the following 478-residue polypeptide: Chromosomal replication initiator protein DnaA (478 aa).

The tract at residues 1–82 (MHTMNKTAES…ELGKNAKLLY (82 aa)) is domain I, interacts with DnaA modulators. Positions 82–140 (YKIKMENTYGNKLPFTEQLPSAHRSPVRTQEIDVPVQQKNPELRNPFIIPGIRNLKIES) are domain II. Residues 141-358 (QLNANYSFDN…GAIISLIAQS (218 aa)) form a domain III, AAA+ region region. ATP contacts are provided by Gly186, Gly188, Lys189, and Thr190. The domain IV, binds dsDNA stretch occupies residues 359–478 (SFNKKEVTLE…VDDINKKLSL (120 aa)).

It belongs to the DnaA family. As to quaternary structure, oligomerizes as a right-handed, spiral filament on DNA at oriC.

Its subcellular location is the cytoplasm. In terms of biological role, plays an essential role in the initiation and regulation of chromosomal replication. ATP-DnaA binds to the origin of replication (oriC) to initiate formation of the DNA replication initiation complex once per cell cycle. Binds the DnaA box (a 9 base pair repeat at the origin) and separates the double-stranded (ds)DNA. Forms a right-handed helical filament on oriC DNA; dsDNA binds to the exterior of the filament while single-stranded (ss)DNA is stabiized in the filament's interior. The ATP-DnaA-oriC complex binds and stabilizes one strand of the AT-rich DNA unwinding element (DUE), permitting loading of DNA polymerase. After initiation quickly degrades to an ADP-DnaA complex that is not apt for DNA replication. Binds acidic phospholipids. This chain is Chromosomal replication initiator protein DnaA, found in Flavobacterium psychrophilum (strain ATCC 49511 / DSM 21280 / CIP 103535 / JIP02/86).